The sequence spans 156 residues: Small ribosomal subunit protein uS7c (156 aa).

This sequence belongs to the universal ribosomal protein uS7 family. Part of the 30S ribosomal subunit.

Its subcellular location is the plastid. One of the primary rRNA binding proteins, it binds directly to 16S rRNA where it nucleates assembly of the head domain of the 30S subunit. This is Small ribosomal subunit protein uS7c (rps7) from Prototheca wickerhamii.